We begin with the raw amino-acid sequence, 450 residues long: MYCSQAITQTSRLPVSNNFYCKKTFFSSVNSNYQNLSQMQSWSSLKVLAFGLPDLHSIPVNLNNSFQEAIVISTINDNNIFADVTNSWIKMHKDKNHYSLFYKEIFKALLTKQIHVIDSPIGSKDIDNKIILIQQYIWKKGLKSPQFNSIARLNKNVDISNISTKFIMEQLSTSPVFVVKNGLNEIILGHPLSRIRRTAFNQIASSLSNLFHQPIATSPISNGLFFFHPDDAIEFKNFVQSKAPEACKDMDIKIQPVGLHVAYKMNRNFSSDIQFRFVPDFKEVGDLIFRHQQAKNLHFHENQYYGKNFFQGQPIYMIQPIIIKHRNGRISIIKFTGANDDREVVFTNLEAANKSWANFIKRTPYLKRLKKPNLLVYNLESFLKDKEVLHKADLTKFIVVTNKSAYITTKESVTLPYHNGLSKHLELNVKPKLFFVKLWIRRLLFTLTYE.

This sequence belongs to the ycf80 family.

The protein localises to the plastid. It localises to the chloroplast. This is an uncharacterized protein from Porphyra purpurea (Red seaweed).